Consider the following 377-residue polypeptide: Cyclin-I (377 aa).

A disordered region spans residues threonine 356–methionine 377. The segment covering proline 367–methionine 377 has biased composition (pro residues).

Belongs to the cyclin family.

In Mus musculus (Mouse), this protein is Cyclin-I (Ccni).